The chain runs to 132 residues: Agouti-signaling protein (132 aa).

An N-terminal signal peptide occupies residues 1–22 (MDVTRLLLATLLVFLCFFTAYS). N-linked (GlcNAc...) asparagine glycosylation is present at asparagine 39. The disordered stretch occupies residues 61-87 (QISRKEAEKKRSSKKEASMKKVARPRT). The span at 63 to 79 (SRKEAEKKRSSKKEASM) shows a compositional bias: basic and acidic residues. Cystine bridges form between cysteine 93-cysteine 108, cysteine 100-cysteine 114, cysteine 107-cysteine 125, cysteine 111-cysteine 132, and cysteine 116-cysteine 123. One can recognise an Agouti domain in the interval 93–132 (CVTTRDSCKPPAPACCDPCASCQCRFFRSACSCRVLSLNC).

The protein localises to the secreted. In terms of biological role, involved in the regulation of melanogenesis. The binding of ASP to MC1R precludes alpha-MSH initiated signaling and thus blocks production of cAMP, leading to a down-regulation of eumelanogenesis (brown/black pigment) and thus increasing synthesis of pheomelanin (yellow/red pigment). The sequence is that of Agouti-signaling protein (ASIP) from Macaca silenus (Lion-tailed macaque).